We begin with the raw amino-acid sequence, 205 residues long: MSAYRKGNIFIISAASGTGKTTLVSRLLANHNGLRVSVSHTTRPPREGEANGVHYHFVSKEEFESLIAQEAFLEYADVFGNYYGTSTEGVNALAAAGYDVILEIDVQGAAQVRNALPEAVGIFILPPSFDVLAARLKGRGTDSREVIQRRLSKARHEIEQSVLFDFVVVNDDLEKAEGDLLHIVNACRLKRSRQLGFIADLLENS.

The region spanning 7–185 is the Guanylate kinase-like domain; the sequence is GNIFIISAAS…AEGDLLHIVN (179 aa). Residue 14–21 coordinates ATP; that stretch reads AASGTGKT.

This sequence belongs to the guanylate kinase family.

The protein resides in the cytoplasm. It catalyses the reaction GMP + ATP = GDP + ADP. In terms of biological role, essential for recycling GMP and indirectly, cGMP. This is Guanylate kinase from Neisseria gonorrhoeae (strain ATCC 700825 / FA 1090).